Consider the following 393-residue polypeptide: Phosphoglycerate kinase (393 aa).

Substrate is bound by residues 21-23 (DLN), R37, 60-63 (HLGR), R115, and R148. ATP-binding positions include K199, E321, and 347–350 (GGDT).

The protein belongs to the phosphoglycerate kinase family. As to quaternary structure, monomer.

It localises to the cytoplasm. The enzyme catalyses (2R)-3-phosphoglycerate + ATP = (2R)-3-phospho-glyceroyl phosphate + ADP. Its pathway is carbohydrate degradation; glycolysis; pyruvate from D-glyceraldehyde 3-phosphate: step 2/5. This Dechloromonas aromatica (strain RCB) protein is Phosphoglycerate kinase.